Consider the following 152-residue polypeptide: Lipoprotein signal peptidase (152 aa).

2 helical membrane passes run 55 to 75 and 85 to 105; these read NKMW…VFYM and LGIS…DRVF. Residues aspartate 111 and aspartate 129 contribute to the active site. Residues 124-144 form a helical membrane-spanning segment; sequence VFNIADSALCIGVVLIIIQTL.

The protein belongs to the peptidase A8 family.

It is found in the cell membrane. It carries out the reaction Release of signal peptides from bacterial membrane prolipoproteins. Hydrolyzes -Xaa-Yaa-Zaa-|-(S,diacylglyceryl)Cys-, in which Xaa is hydrophobic (preferably Leu), and Yaa (Ala or Ser) and Zaa (Gly or Ala) have small, neutral side chains.. Its pathway is protein modification; lipoprotein biosynthesis (signal peptide cleavage). In terms of biological role, this protein specifically catalyzes the removal of signal peptides from prolipoproteins. This is Lipoprotein signal peptidase from Bacillus cereus (strain AH187).